The sequence spans 197 residues: Pinin homolog 1 (197 aa).

A disordered region spans residues 30 to 73 (LDGKVNNEDSHMEIDQPEGSMEEDDHRQVKEKNTSENSVEQKRG). Composition is skewed to basic and acidic residues over residues 34 to 43 (VNNEDSHMEI) and 53 to 71 (DDHRQVKEKNTSENSVEQK).

It belongs to the pinin family.

The protein resides in the nucleus. Its subcellular location is the cytoplasm. Transcriptional activator that may participate in the regulation of mRNA splicing. This Schizosaccharomyces pombe (strain 972 / ATCC 24843) (Fission yeast) protein is Pinin homolog 1 (pnn1).